The sequence spans 366 residues: Flagellar P-ring protein (366 aa).

Residues 1–24 (MWPLLLAVALSTLLPLAMPGSAGA) form the signal peptide.

This sequence belongs to the FlgI family. The basal body constitutes a major portion of the flagellar organelle and consists of four rings (L,P,S, and M) mounted on a central rod.

It localises to the periplasm. It is found in the bacterial flagellum basal body. Functionally, assembles around the rod to form the L-ring and probably protects the motor/basal body from shearing forces during rotation. The polypeptide is Flagellar P-ring protein (Nitratidesulfovibrio vulgaris (strain ATCC 29579 / DSM 644 / CCUG 34227 / NCIMB 8303 / VKM B-1760 / Hildenborough) (Desulfovibrio vulgaris)).